A 353-amino-acid chain; its full sequence is Photosystem II protein D1 (353 aa).

T2 is modified (N-acetylthreonine). Residue T2 is modified to Phosphothreonine. The next 3 membrane-spanning stretches (helical) occupy residues 29-46 (YIGWFGVLMIPTLLTATS), 118-133 (HFLLGVACYMGREWEL), and 142-156 (WIAVAYSAPVAAATA). H118 lines the chlorophyll a pocket. Y126 serves as a coordination point for pheophytin a. The [CaMn4O5] cluster site is built by D170 and E189. The helical transmembrane segment at 197–218 (FHMLGVAGVFGGSLFSAMHGSL) threads the bilayer. Position 198 (H198) interacts with chlorophyll a. A quinone contacts are provided by residues H215 and 264-265 (SF). H215 serves as a coordination point for Fe cation. Fe cation is bound at residue H272. A helical transmembrane segment spans residues 274–288 (FLAAWPVVGIWFTAL). H332, E333, D342, and A344 together coordinate [CaMn4O5] cluster. The propeptide occupies 345–353 (AIEAPSTNG).

The protein belongs to the reaction center PufL/M/PsbA/D family. As to quaternary structure, PSII is composed of 1 copy each of membrane proteins PsbA, PsbB, PsbC, PsbD, PsbE, PsbF, PsbH, PsbI, PsbJ, PsbK, PsbL, PsbM, PsbT, PsbX, PsbY, PsbZ, Psb30/Ycf12, at least 3 peripheral proteins of the oxygen-evolving complex and a large number of cofactors. It forms dimeric complexes. The D1/D2 heterodimer binds P680, chlorophylls that are the primary electron donor of PSII, and subsequent electron acceptors. It shares a non-heme iron and each subunit binds pheophytin, quinone, additional chlorophylls, carotenoids and lipids. D1 provides most of the ligands for the Mn4-Ca-O5 cluster of the oxygen-evolving complex (OEC). There is also a Cl(-1) ion associated with D1 and D2, which is required for oxygen evolution. The PSII complex binds additional chlorophylls, carotenoids and specific lipids. serves as cofactor. Post-translationally, tyr-161 forms a radical intermediate that is referred to as redox-active TyrZ, YZ or Y-Z. In terms of processing, C-terminally processed by CTPA; processing is essential to allow assembly of the oxygen-evolving complex and thus photosynthetic growth.

The protein resides in the plastid. Its subcellular location is the chloroplast thylakoid membrane. It carries out the reaction 2 a plastoquinone + 4 hnu + 2 H2O = 2 a plastoquinol + O2. In terms of biological role, photosystem II (PSII) is a light-driven water:plastoquinone oxidoreductase that uses light energy to abstract electrons from H(2)O, generating O(2) and a proton gradient subsequently used for ATP formation. It consists of a core antenna complex that captures photons, and an electron transfer chain that converts photonic excitation into a charge separation. The D1/D2 (PsbA/PsbD) reaction center heterodimer binds P680, the primary electron donor of PSII as well as several subsequent electron acceptors. The polypeptide is Photosystem II protein D1 (Petunia hybrida (Petunia)).